Here is a 259-residue protein sequence, read N- to C-terminus: MSTPIIVMGAGGRMGSTICRLVQEEPQLCLAAVLERPDRASGVARDGCIAGSDPDVVFPQVPGGVIIDFTAPEASMATARAAARHGNAVVIGTTGFNEEQKAELAELARQIRLFWAPNMSVGVNVLLKVLPELVRLLGEKYDLEMVELHHNRKKDSPSGTALRLAECLAEARDWNLPDVACYHREGIIGERPQKEIGVQTIRGGDVVGVHTVYCLGPGERIEVTHQAHSRETFAQGALRAAAWLATQKPGKLYNMADIF.

Residues 9 to 14 (GAGGRM) and glutamate 35 contribute to the NAD(+) site. Residue arginine 36 coordinates NADP(+). NAD(+)-binding positions include 92–94 (GTT) and 116–119 (APNM). Histidine 149 serves as the catalytic Proton donor/acceptor. (S)-2,3,4,5-tetrahydrodipicolinate is bound at residue histidine 150. Lysine 153 (proton donor) is an active-site residue. 159–160 (GT) is a (S)-2,3,4,5-tetrahydrodipicolinate binding site.

Belongs to the DapB family.

It is found in the cytoplasm. It carries out the reaction (S)-2,3,4,5-tetrahydrodipicolinate + NAD(+) + H2O = (2S,4S)-4-hydroxy-2,3,4,5-tetrahydrodipicolinate + NADH + H(+). The enzyme catalyses (S)-2,3,4,5-tetrahydrodipicolinate + NADP(+) + H2O = (2S,4S)-4-hydroxy-2,3,4,5-tetrahydrodipicolinate + NADPH + H(+). It functions in the pathway amino-acid biosynthesis; L-lysine biosynthesis via DAP pathway; (S)-tetrahydrodipicolinate from L-aspartate: step 4/4. Catalyzes the conversion of 4-hydroxy-tetrahydrodipicolinate (HTPA) to tetrahydrodipicolinate. The chain is 4-hydroxy-tetrahydrodipicolinate reductase from Nitratidesulfovibrio vulgaris (strain DP4) (Desulfovibrio vulgaris).